The chain runs to 43 residues: Omega-ctenitoxin-Pr1a (43 aa).

Intrachain disulfides connect cysteine 2-cysteine 17, cysteine 9-cysteine 22, cysteine 16-cysteine 33, and cysteine 24-cysteine 31. Glycine 43 carries the glycine amide modification.

As to expression, expressed by the venom gland.

It localises to the secreted. In terms of biological role, inhibits high-voltage activated calcium channels. Shifts the voltage-dependence for activation towards hyperpolarized membrane potentials for L- (Cav1), P/Q- (Cav2.1/CACNA1A) and R-type (Cav2.3/CACNA1E) calcium currents. Causes immediate agitation and clockwise gyration, followed by the gradual development of general flaccid paralysis when injected intracerebroventricular into mice at dose levels of 5 ug per mouse. This chain is Omega-ctenitoxin-Pr1a, found in Phoneutria reidyi (Brazilian Amazonian armed spider).